The sequence spans 342 residues: Succinylglutamate desuccinylase (342 aa).

The Zn(2+) site is built by His63, Glu66, and His155. Glu219 is an active-site residue.

Belongs to the AspA/AstE family. Succinylglutamate desuccinylase subfamily. It depends on Zn(2+) as a cofactor.

It carries out the reaction N-succinyl-L-glutamate + H2O = L-glutamate + succinate. Its pathway is amino-acid degradation; L-arginine degradation via AST pathway; L-glutamate and succinate from L-arginine: step 5/5. Its function is as follows. Transforms N(2)-succinylglutamate into succinate and glutamate. This Vibrio campbellii (strain ATCC BAA-1116) protein is Succinylglutamate desuccinylase.